A 276-amino-acid polypeptide reads, in one-letter code: Secreted RxLR effector protein 85 (276 aa).

The N-terminal stretch at 1 to 27 is a signal peptide; the sequence is MRYCAFRLGLFFIGYSCCVLLSTPTLA. The short motif at 110 to 113 is the RxLR element; sequence RQLR.

Belongs to the RxLR effector family.

The protein localises to the secreted. Its subcellular location is the host cell membrane. Functionally, secreted effector that partially suppresses the host cell death induced by cell death-inducing proteins. This chain is Secreted RxLR effector protein 85, found in Plasmopara viticola (Downy mildew of grapevine).